A 79-amino-acid chain; its full sequence is Acyl carrier protein (79 aa).

Positions 2 to 77 (STIEERVKKI…QAIDYVKSHV (76 aa)) constitute a Carrier domain. Position 37 is an O-(pantetheine 4'-phosphoryl)serine (Ser37).

It belongs to the acyl carrier protein (ACP) family. Post-translationally, 4'-phosphopantetheine is transferred from CoA to a specific serine of apo-ACP by AcpS. This modification is essential for activity because fatty acids are bound in thioester linkage to the sulfhydryl of the prosthetic group.

The protein resides in the cytoplasm. It functions in the pathway lipid metabolism; fatty acid biosynthesis. Its function is as follows. Carrier of the growing fatty acid chain in fatty acid biosynthesis. The polypeptide is Acyl carrier protein (Xanthomonas oryzae pv. oryzae (strain MAFF 311018)).